The chain runs to 489 residues: Betaine aldehyde dehydrogenase (489 aa).

The K(+) site is built by Thr26 and Asp93. 150-152 (GAW) serves as a coordination point for NAD(+). Lys162 (charge relay system) is an active-site residue. 176–179 (KPSE) contacts NAD(+). Val180 lines the K(+) pocket. 229–232 (GVET) is an NAD(+) binding site. Leu245 lines the K(+) pocket. The active-site Proton acceptor is the Glu251. Residues Gly253, Cys285, and Glu386 each contribute to the NAD(+) site. Cys285 serves as the catalytic Nucleophile. Cysteine sulfenic acid (-SOH) is present on Cys285. K(+) is bound by residues Lys456 and Gly459. The active-site Charge relay system is the Glu463.

This sequence belongs to the aldehyde dehydrogenase family. As to quaternary structure, dimer of dimers. It depends on K(+) as a cofactor.

The enzyme catalyses betaine aldehyde + NAD(+) + H2O = glycine betaine + NADH + 2 H(+). Its pathway is amine and polyamine biosynthesis; betaine biosynthesis via choline pathway; betaine from betaine aldehyde: step 1/1. Its function is as follows. Involved in the biosynthesis of the osmoprotectant glycine betaine. Catalyzes the irreversible oxidation of betaine aldehyde to the corresponding acid. This chain is Betaine aldehyde dehydrogenase, found in Burkholderia pseudomallei (strain K96243).